Here is a 100-residue protein sequence, read N- to C-terminus: Large ribosomal subunit protein bL28 (100 aa).

This sequence belongs to the bacterial ribosomal protein bL28 family.

The protein is Large ribosomal subunit protein bL28 of Ehrlichia ruminantium (strain Welgevonden).